The sequence spans 621 residues: Membrane protein insertase YidC (621 aa).

The next 6 helical transmembrane spans lie at 1–21 (MDKN…GFSI), 363–383 (GWGL…KVLV), 436–456 (MGGC…FFFV), 486–506 (IPLL…TNIL), 527–547 (LMMY…SSGL), and 549–569 (YYYF…RKTT).

Belongs to the OXA1/ALB3/YidC family. Type 1 subfamily. In terms of assembly, interacts with the Sec translocase complex via SecD. Specifically interacts with transmembrane segments of nascent integral membrane proteins during membrane integration.

The protein localises to the cell inner membrane. Functionally, required for the insertion and/or proper folding and/or complex formation of integral membrane proteins into the membrane. Involved in integration of membrane proteins that insert both dependently and independently of the Sec translocase complex, as well as at least some lipoproteins. Aids folding of multispanning membrane proteins. The polypeptide is Membrane protein insertase YidC (Phocaeicola vulgatus (strain ATCC 8482 / DSM 1447 / JCM 5826 / CCUG 4940 / NBRC 14291 / NCTC 11154) (Bacteroides vulgatus)).